Here is a 361-residue protein sequence, read N- to C-terminus: Protein YIM1-2 (361 aa).

This sequence belongs to the YIM1 family.

The protein resides in the lipid droplet. Its subcellular location is the mitochondrion. The protein is Protein YIM1-2 (YIM1-2) of Lachancea thermotolerans (strain ATCC 56472 / CBS 6340 / NRRL Y-8284) (Yeast).